Here is a 79-residue protein sequence, read N- to C-terminus: uncharacterized protein (79 aa).

Residues 10–60 (EAVLTMDSKGQILLPKELRERAGLKAGDRLVAIAGCDENEEVCCLILVKAE) form the SpoVT-AbrB domain.

This is an uncharacterized protein from Archaeoglobus fulgidus (strain ATCC 49558 / DSM 4304 / JCM 9628 / NBRC 100126 / VC-16).